A 382-amino-acid polypeptide reads, in one-letter code: D-galactonate dehydratase (382 aa).

Position 183 (Asp183) interacts with Mg(2+). The active-site Proton donor is the His185. Residues Glu209 and Glu235 each contribute to the Mg(2+) site. Catalysis depends on His285, which acts as the Proton acceptor.

Belongs to the mandelate racemase/muconate lactonizing enzyme family. GalD subfamily. Requires Mg(2+) as cofactor.

It catalyses the reaction D-galactonate = 2-dehydro-3-deoxy-D-galactonate + H2O. The protein operates within carbohydrate acid metabolism; D-galactonate degradation; D-glyceraldehyde 3-phosphate and pyruvate from D-galactonate: step 1/3. Its function is as follows. Catalyzes the dehydration of D-galactonate to 2-keto-3-deoxy-D-galactonate. In Cronobacter sakazakii (strain ATCC BAA-894) (Enterobacter sakazakii), this protein is D-galactonate dehydratase.